The primary structure comprises 96 residues: Aspartyl/glutamyl-tRNA(Asn/Gln) amidotransferase subunit C (96 aa).

The protein belongs to the GatC family. Heterotrimer of A, B and C subunits.

The catalysed reaction is L-glutamyl-tRNA(Gln) + L-glutamine + ATP + H2O = L-glutaminyl-tRNA(Gln) + L-glutamate + ADP + phosphate + H(+). It catalyses the reaction L-aspartyl-tRNA(Asn) + L-glutamine + ATP + H2O = L-asparaginyl-tRNA(Asn) + L-glutamate + ADP + phosphate + 2 H(+). In terms of biological role, allows the formation of correctly charged Asn-tRNA(Asn) or Gln-tRNA(Gln) through the transamidation of misacylated Asp-tRNA(Asn) or Glu-tRNA(Gln) in organisms which lack either or both of asparaginyl-tRNA or glutaminyl-tRNA synthetases. The reaction takes place in the presence of glutamine and ATP through an activated phospho-Asp-tRNA(Asn) or phospho-Glu-tRNA(Gln). This Trichormus variabilis (strain ATCC 29413 / PCC 7937) (Anabaena variabilis) protein is Aspartyl/glutamyl-tRNA(Asn/Gln) amidotransferase subunit C.